The following is a 360-amino-acid chain: Hydroxyproline O-arabinosyltransferase RDN2 (360 aa).

Residues 13–33 form a helical; Signal-anchor membrane-spanning segment; it reads VLGSSFATYNLVTMIIHYGSA.

The protein resides in the golgi apparatus membrane. The enzyme catalyses trans-4-hydroxy-L-prolyl-[protein] + UDP-beta-L-arabinofuranose = O-(beta-L-arabinofuranosyl)-trans-4-hydroxy-L-prolyl-[protein] + UDP + H(+). Functionally, glycosyltransferase involved in the O-arabinosylation of several proteins including extensins and small signaling peptides. Catalyzes the transfer of the initial L-arabinose to the hydroxyl group of Hyp residues. Probably involved in the arabinosylation of CLAVATA3/ESR-related (CLE) signaling peptides that move from root to shoot, to interact with SUNN receptor kinase signaling that regulates nodulation. Involved in long distance nodulation signaling events. Involved in the autoregulation of nodulation (AON), a long distance systemic signaling from root to shoot and back again, which allows legumes to limit the number of root nodules formed based on available nitrogen and previous rhizobial colonization. Functions in the root, upstream of the shoot receptor kinase SUNN and via CLE peptide, to control AON. In Medicago truncatula (Barrel medic), this protein is Hydroxyproline O-arabinosyltransferase RDN2.